The sequence spans 417 residues: NADH-quinone oxidoreductase subunit D (417 aa).

Belongs to the complex I 49 kDa subunit family. As to quaternary structure, NDH-1 is composed of 14 different subunits. Subunits NuoB, C, D, E, F, and G constitute the peripheral sector of the complex.

It is found in the cell inner membrane. The enzyme catalyses a quinone + NADH + 5 H(+)(in) = a quinol + NAD(+) + 4 H(+)(out). In terms of biological role, NDH-1 shuttles electrons from NADH, via FMN and iron-sulfur (Fe-S) centers, to quinones in the respiratory chain. The immediate electron acceptor for the enzyme in this species is believed to be ubiquinone. Couples the redox reaction to proton translocation (for every two electrons transferred, four hydrogen ions are translocated across the cytoplasmic membrane), and thus conserves the redox energy in a proton gradient. The chain is NADH-quinone oxidoreductase subunit D from Polynucleobacter necessarius subsp. necessarius (strain STIR1).